Here is a 435-residue protein sequence, read N- to C-terminus: E3 ubiquitin-protein ligase RNFT1 (435 aa).

The disordered stretch occupies residues 1-62 (MPLFLLSLPT…SSEDASTPQC (62 aa)). A compositionally biased stretch (basic and acidic residues) spans 16 to 34 (GHERRQRPEAKTSGSEKKY). A compositionally biased stretch (polar residues) spans 40 to 62 (ANRSQLHSPPGTGSSEDASTPQC). 6 consecutive transmembrane segments (helical) span residues 158–178 (ILILSVKLVMQHITGISLGIG), 203–223 (IQCAWLLVFLAGSSVLLYYTF), 233–253 (IFLNPTLDHLSFWEVFWIVGI), 256–276 (FILKFFFMGLKCLILLVPSFI), 298–318 (TFVPIPVWFRYLISYGEFGNV), and 323–343 (LGILLALLYLILKLLEFFGHL). The segment at 368–419 (CSDVDDICSICQAEFQKPILLICQHIFCEECMTLWFNREKTCPLCRTVISDH) is required for ubiquitin ligase activity and for protection against ER stress-induced cell death. The RING-type zinc finger occupies 375–413 (CSICQAEFQKPILLICQHIFCEECMTLWFNREKTCPLCR).

Expressed at highest levels in testis, lower levels in heart, liver, lung, and kidney. Not detected in brain, ovary, and uterus. Down-regulated in testis from patients with maturation arrest (MA) or Sertoli cell-only syndrome (SCOS). Ubiquitously expressed with high expression in testis.

Its subcellular location is the endoplasmic reticulum membrane. It carries out the reaction S-ubiquitinyl-[E2 ubiquitin-conjugating enzyme]-L-cysteine + [acceptor protein]-L-lysine = [E2 ubiquitin-conjugating enzyme]-L-cysteine + N(6)-ubiquitinyl-[acceptor protein]-L-lysine.. It participates in protein modification; protein ubiquitination. Its function is as follows. E3 ubiquitin-protein ligase that acts in the endoplasmic reticulum (ER)-associated degradation (ERAD) pathway, which targets misfolded proteins that accumulate in the endoplasmic reticulum (ER) for ubiquitination and subsequent proteasome-mediated degradation. Protects cells from ER stress-induced apoptosis. The sequence is that of E3 ubiquitin-protein ligase RNFT1 (RNFT1) from Homo sapiens (Human).